A 158-amino-acid polypeptide reads, in one-letter code: Regulator of sigma D (158 aa).

Belongs to the Rsd/AlgQ family. Interacts with RpoD.

Its subcellular location is the cytoplasm. Functionally, binds RpoD and negatively regulates RpoD-mediated transcription activation by preventing the interaction between the primary sigma factor RpoD with the catalytic core of the RNA polymerase and with promoter DNA. May be involved in replacement of the RNA polymerase sigma subunit from RpoD to RpoS during the transition from exponential growth to the stationary phase. The chain is Regulator of sigma D from Escherichia coli (strain SMS-3-5 / SECEC).